The sequence spans 1391 residues: DNA-directed RNA polymerase subunit beta' (1391 aa).

Positions 72, 74, 87, and 90 each coordinate Zn(2+). Mg(2+) is bound by residues Asp-462, Asp-464, and Asp-466. 4 residues coordinate Zn(2+): Cys-816, Cys-890, Cys-897, and Cys-900.

This sequence belongs to the RNA polymerase beta' chain family. As to quaternary structure, the RNAP catalytic core consists of 2 alpha, 1 beta, 1 beta' and 1 omega subunit. When a sigma factor is associated with the core the holoenzyme is formed, which can initiate transcription. It depends on Mg(2+) as a cofactor. Requires Zn(2+) as cofactor.

It catalyses the reaction RNA(n) + a ribonucleoside 5'-triphosphate = RNA(n+1) + diphosphate. DNA-dependent RNA polymerase catalyzes the transcription of DNA into RNA using the four ribonucleoside triphosphates as substrates. The chain is DNA-directed RNA polymerase subunit beta' from Neisseria gonorrhoeae (strain ATCC 700825 / FA 1090).